A 530-amino-acid chain; its full sequence is MTNNIFKYFNIKELEKFGKFYKVKKEYEIPKKLESKLILVTSINPTPEGEGKTTTLIGINDCLNYFGKESIACLRQPSMGPYFGIKGGATGSGKCEIQNPEKVNCGFTNDFYAIEAANNLIMSVIENEIYFNTDLEIDPQKIIWKRCIDINDRSLRDINYQVSKNTKINSSFSITAASNLMALFCLAKSKSDFKKRIENTLVAFSKSNKAIYVKDLNIIDSIMLILDDALKPNLVFSQDNNPIIMHGGPFANIAHGCNSVIALSCGLNKAEYVLTEAGFGSELGAEKFINILCRETNLVPNLVVLTITLKAIKYHGVNNSNNTSPLTDEKEKIDIGFNNVIHHFNLLKNLNLNVCIVINKFSDDNKNELDYLFNKSSELTKTVISTMWQDGASKNKSLFETIIESVQEPKPINWTYDLKDNAVNKINDLSTKVYNGATITYSDLATAKLKDNENWIQDYYVCGAKTPYSPSIKNEYMDTNKHDIHVEDIEINHAVKFIIPIFSKTFLMPGLPKVPNAKKIKINFDKFKYE.

ATP is bound at residue 46–53; sequence TPEGEGKT.

Belongs to the formate--tetrahydrofolate ligase family.

It carries out the reaction (6S)-5,6,7,8-tetrahydrofolate + formate + ATP = (6R)-10-formyltetrahydrofolate + ADP + phosphate. The protein operates within one-carbon metabolism; tetrahydrofolate interconversion. The polypeptide is Formate--tetrahydrofolate ligase (Malacoplasma penetrans (strain HF-2) (Mycoplasma penetrans)).